We begin with the raw amino-acid sequence, 465 residues long: Gamma-aminobutyric acid receptor subunit gamma-1 (465 aa).

A signal peptide spans 1-20 (MGSGKAFLFSPSLLWSQTRG). Residues 21 to 273 (VRLIFLLLTL…FDLSRRMGYF (253 aa)) are Extracellular-facing. Residues N50 and N127 are each glycosylated (N-linked (GlcNAc...) asparagine). Residues C188 and C202 are joined by a disulfide bond. A glycan (N-linked (GlcNAc...) asparagine) is linked at N245. A helical membrane pass occupies residues 274–294 (TIQTYIPCILTVVLSWVSFWI). Residues 295 to 300 (NKDAVP) lie on the Cytoplasmic side of the membrane. A helical transmembrane segment spans residues 301–320 (ARTSLGITTVLTMTTLSTIA). The Extracellular segment spans residues 321–328 (RKSLPKVS). The chain crosses the membrane as a helical span at residues 329–349 (YVTAMDLFVSVCFIFVFAALM). Residues 350–444 (EYGTLHYFTS…RIAKIDSYSR (95 aa)) lie on the Cytoplasmic side of the membrane. The chain crosses the membrane as a helical span at residues 445 to 465 (IFFPTAFALFNLVYWVGYLYL).

This sequence belongs to the ligand-gated ion channel (TC 1.A.9) family. Gamma-aminobutyric acid receptor (TC 1.A.9.5) subfamily. GABRG1 sub-subfamily. As to quaternary structure, heteropentamer, formed by a combination of alpha (GABRA1-6), beta (GABRB1-3), gamma (GABRG1-3), delta (GABRD), epsilon (GABRE), rho (GABRR1-3), pi (GABRP) and theta (GABRQ) chains, each subunit exhibiting distinct physiological and pharmacological properties. In terms of processing, may be palmitoylated. In terms of tissue distribution, expressed in brain.

Its subcellular location is the postsynaptic cell membrane. The protein resides in the cell membrane. It carries out the reaction chloride(in) = chloride(out). Functionally, gamma subunit of the heteropentameric ligand-gated chloride channel gated by gamma-aminobutyric acid (GABA), a major inhibitory neurotransmitter in the brain. GABA-gated chloride channels, also named GABA(A) receptors (GABAAR), consist of five subunits arranged around a central pore and contain GABA active binding site(s) located at the alpha and beta subunit interface(s). When activated by GABA, GABAARs selectively allow the flow of chloride anions across the cell membrane down their electrochemical gradient. Chloride influx into the postsynaptic neuron following GABAAR opening decreases the neuron ability to generate a new action potential, thereby reducing nerve transmission. The sequence is that of Gamma-aminobutyric acid receptor subunit gamma-1 from Mus musculus (Mouse).